Consider the following 113-residue polypeptide: KKRRQRRRAAQAVRLIKFLYQSNPPPSPEGTRQARRNRRRRWRQRQRQIRSISGWIISNYLGRPAEPVPLQLPPLERLTLDCNEDCGTSGTQGVGSPQILVESPTILESGTKE.

The tract at residues 15 to 23 (LIKFLYQSN) is homomultimerization. The disordered stretch occupies residues 17 to 45 (KFLYQSNPPPSPEGTRQARRNRRRRWRQR). A Nuclear localization signal and RNA-binding (RRE) motif is present at residues 31–47 (TRQARRNRRRRWRQRQR). A compositionally biased stretch (basic residues) spans 33-45 (QARRNRRRRWRQR). The Nuclear export signal and binding to XPO1 motif lies at 70-81 (LQLPPLERLTLD). A phosphoserine; by host mark is found at serine 89 and serine 96. The disordered stretch occupies residues 89–113 (SGTQGVGSPQILVESPTILESGTKE).

The protein belongs to the HIV-1 REV protein family. Homomultimer; when bound to the RRE. Multimeric assembly is essential for activity and may involve XPO1. Binds to human KPNB1, XPO1, TNPO1, RANBP5 and IPO7. Interacts with the viral Integrase. Interacts with human KHDRBS1. Interacts with human NAP1; this interaction decreases Rev multimerization and stimulates its activity. Interacts with human DEAD-box helicases DDX3 and DDX24; these interactions may serve for viral RNA export to the cytoplasm and packaging, respectively. Interacts with human PSIP1; this interaction may inhibit HIV-1 DNA integration by promoting dissociation of the Integrase-LEDGF/p75 complex. In terms of processing, asymmetrically arginine dimethylated at one site by host PRMT6. Methylation impairs the RNA-binding activity and export of viral RNA from the nucleus to the cytoplasm. Phosphorylated by protein kinase CK2. Presence of, and maybe binding to the N-terminus of the regulatory beta subunit of CK2 is necessary for CK2-mediated Rev's phosphorylation.

Its subcellular location is the host nucleus. It is found in the host nucleolus. The protein localises to the host cytoplasm. Its function is as follows. Escorts unspliced or incompletely spliced viral pre-mRNAs (late transcripts) out of the nucleus of infected cells. These pre-mRNAs carry a recognition sequence called Rev responsive element (RRE) located in the env gene, that is not present in fully spliced viral mRNAs (early transcripts). This function is essential since most viral proteins are translated from unspliced or partially spliced pre-mRNAs which cannot exit the nucleus by the pathway used by fully processed cellular mRNAs. Rev itself is translated from a fully spliced mRNA that readily exits the nucleus. Rev's nuclear localization signal (NLS) binds directly to KPNB1/Importin beta-1 without previous binding to KPNA1/Importin alpha-1. KPNB1 binds to the GDP bound form of RAN (Ran-GDP) and targets Rev to the nucleus. In the nucleus, the conversion from Ran-GDP to Ran-GTP dissociates Rev from KPNB1 and allows Rev's binding to the RRE in viral pre-mRNAs. Rev multimerization on the RRE via cooperative assembly exposes its nuclear export signal (NES) to the surface. Rev can then form a complex with XPO1/CRM1 and Ran-GTP, leading to nuclear export of the complex. Conversion from Ran-GTP to Ran-GDP mediates dissociation of the Rev/RRE/XPO1/RAN complex, so that Rev can return to the nucleus for a subsequent round of export. Beside KPNB1, also seems to interact with TNPO1/Transportin-1, RANBP5/IPO5 and IPO7/RANBP7 for nuclear import. The nucleoporin-like HRB/RIP is an essential cofactor that probably indirectly interacts with Rev to release HIV RNAs from the perinuclear region to the cytoplasm. In Human immunodeficiency virus type 1 group M subtype B (isolate JH32) (HIV-1), this protein is Protein Rev.